The sequence spans 435 residues: Endosome-associated-trafficking regulator 1 (435 aa).

Residues Ser-18 and Ser-147 each carry the phosphoserine modification. 2 disordered regions span residues 136–185 (ASRH…TGWS) and 225–251 (ESLP…PSAD). A compositionally biased stretch (acidic residues) spans 173–182 (LLDEEEDEDT). The segment at 173 to 198 (LLDEEEDEDTGWSGAYLPSAIEQTHP) is required for interaction with PTPN13. Residues 240-250 (SPASPAGSPSA) show a composition bias toward low complexity. Phosphoserine occurs at positions 243 and 247. The stretch at 261-371 (DRHLRTLQIS…FQRENEALRC (111 aa)) forms a coiled coil.

This sequence belongs to the ENTR1 family. As to quaternary structure, found in a complex with ENTR1, PTPN13 and GIT1. Interacts with PTPN13 (via the FERM domain). Interacts (via N-terminus) with GIT1 (via N- and C-terminus); this interaction is direct. Interacts with NOD2. Interacts (via N-terminus) with IFT88. Interacts with VPS35. In terms of processing, phosphorylated. In terms of tissue distribution, expressed in the colon (at protein level).

It localises to the cytoplasm. Its subcellular location is the early endosome. It is found in the endosome. The protein resides in the recycling endosome. The protein localises to the midbody. It localises to the cytoskeleton. Its subcellular location is the microtubule organizing center. It is found in the centrosome. The protein resides in the cilium basal body. Its function is as follows. Endosome-associated protein that plays a role in membrane receptor sorting, cytokinesis and ciliogenesis. Involved in the endosome-to-plasma membrane trafficking and recycling of SNX27-retromer-dependent cargo proteins, such as GLUT1. Involved in the regulation of cytokinesis; the function may involve PTPN13 and GIT1. Plays a role in the formation of cilia. Involved in cargo protein localization, such as PKD2, at primary cilia. Involved in the presentation of the tumor necrosis factor (TNF) receptor TNFRSF1A on the cell surface, and hence in the modulation of the TNF-induced apoptosis. This chain is Endosome-associated-trafficking regulator 1, found in Homo sapiens (Human).